Consider the following 467-residue polypeptide: tRNA-2-methylthio-N(6)-dimethylallyladenosine synthase (467 aa).

An MTTase N-terminal domain is found at 5 to 125 (RKLHIKSYGC…LPQLLAQASR (121 aa)). Positions 14, 50, 88, 166, 170, and 173 each coordinate [4Fe-4S] cluster. Positions 152–384 (RARGVSAFVT…QSLIDSQQAA (233 aa)) constitute a Radical SAM core domain. In terms of domain architecture, TRAM spans 387–449 (KAAIGSVVDV…RYSLLGELVA (63 aa)).

This sequence belongs to the methylthiotransferase family. MiaB subfamily. In terms of assembly, monomer. The cofactor is [4Fe-4S] cluster.

Its subcellular location is the cytoplasm. It carries out the reaction N(6)-dimethylallyladenosine(37) in tRNA + (sulfur carrier)-SH + AH2 + 2 S-adenosyl-L-methionine = 2-methylsulfanyl-N(6)-dimethylallyladenosine(37) in tRNA + (sulfur carrier)-H + 5'-deoxyadenosine + L-methionine + A + S-adenosyl-L-homocysteine + 2 H(+). Functionally, catalyzes the methylthiolation of N6-(dimethylallyl)adenosine (i(6)A), leading to the formation of 2-methylthio-N6-(dimethylallyl)adenosine (ms(2)i(6)A) at position 37 in tRNAs that read codons beginning with uridine. The polypeptide is tRNA-2-methylthio-N(6)-dimethylallyladenosine synthase (Bradyrhizobium sp. (strain ORS 278)).